The chain runs to 229 residues: 7-cyano-7-deazaguanine synthase (229 aa).

9-19 (LSGGLDSATVL) provides a ligand contact to ATP. Residues Cys188, Cys198, Cys201, and Cys204 each coordinate Zn(2+).

This sequence belongs to the QueC family. Requires Zn(2+) as cofactor.

The catalysed reaction is 7-carboxy-7-deazaguanine + NH4(+) + ATP = 7-cyano-7-deazaguanine + ADP + phosphate + H2O + H(+). It participates in purine metabolism; 7-cyano-7-deazaguanine biosynthesis. Functionally, catalyzes the ATP-dependent conversion of 7-carboxy-7-deazaguanine (CDG) to 7-cyano-7-deazaguanine (preQ(0)). This is 7-cyano-7-deazaguanine synthase from Methylobacillus flagellatus (strain ATCC 51484 / DSM 6875 / VKM B-1610 / KT).